Here is a 166-residue protein sequence, read N- to C-terminus: MNLRQQLTQLLSIAYVFTSAFVAWKALSIVANSHSPIVVVLSGSMEPAFQRGDILFLWNRDSQAKVGDVVVYEIKGKSIPIVHRVLREHHGKDKQFLLTKGDNNALDDLSLYARKQNYLNQKTDLVGTVKAYLPKVGYVTILLTENMYFRYALLGFMGLSALLSGE.

Residues 1–9 (MNLRQQLTQ) lie on the Cytoplasmic side of the membrane. The chain crosses the membrane as a helical; Signal-anchor for type II membrane protein span at residues 10 to 31 (LLSIAYVFTSAFVAWKALSIVA). Residues 32–166 (NSHSPIVVVL…MGLSALLSGE (135 aa)) are Lumenal-facing. Residues Ser44, His83, and Asp108 each act as charge relay system in the active site. Residues 152–163 (ALLGFMGLSALL) are C-terminal short (CTS) helix.

This sequence belongs to the peptidase S26B family. Component of the signal peptidase complex (SPC) composed of a catalytic subunit SEC11 and three accessory subunits SPC1, SPC2 and SPC3. The complex induces a local thinning of the ER membrane which is used to measure the length of the signal peptide (SP) h-region of protein substrates. This ensures the selectivity of the complex towards h-regions shorter than 18-20 amino acids. SPC associates with the translocon complex.

The protein resides in the endoplasmic reticulum membrane. The enzyme catalyses Cleavage of hydrophobic, N-terminal signal or leader sequences from secreted and periplasmic proteins.. In terms of biological role, catalytic component of the signal peptidase complex (SPC) which catalyzes the cleavage of N-terminal signal sequences from nascent proteins as they are translocated into the lumen of the endoplasmic reticulum. Specifically cleaves N-terminal signal peptides that contain a hydrophobic alpha-helix (h-region) shorter than 18-20 amino acids. This chain is Signal peptidase complex catalytic subunit SEC11 (SEC11), found in Clavispora lusitaniae (strain ATCC 42720) (Yeast).